The primary structure comprises 470 residues: Ribosomal protein uS12 methylthiotransferase RimO (470 aa).

Positions 33–143 constitute an MTTase N-terminal domain; sequence NKIGFVSLGC…VLEHVHQYAP (111 aa). Residues Cys42, Cys78, Cys107, Cys175, Cys179, and Cys182 each contribute to the [4Fe-4S] cluster site. In terms of domain architecture, Radical SAM core spans 161 to 398; the sequence is LTPKHYAYLK…MLVQQEISAA (238 aa). In terms of domain architecture, TRAM spans 401-467; the sequence is QKRIGSTMQV…EYDLWGSILH (67 aa).

Belongs to the methylthiotransferase family. RimO subfamily. [4Fe-4S] cluster is required as a cofactor.

The protein resides in the cytoplasm. It catalyses the reaction L-aspartate(89)-[ribosomal protein uS12]-hydrogen + (sulfur carrier)-SH + AH2 + 2 S-adenosyl-L-methionine = 3-methylsulfanyl-L-aspartate(89)-[ribosomal protein uS12]-hydrogen + (sulfur carrier)-H + 5'-deoxyadenosine + L-methionine + A + S-adenosyl-L-homocysteine + 2 H(+). Its function is as follows. Catalyzes the methylthiolation of an aspartic acid residue of ribosomal protein uS12. The sequence is that of Ribosomal protein uS12 methylthiotransferase RimO from Vibrio cholerae serotype O1 (strain ATCC 39315 / El Tor Inaba N16961).